The following is a 681-amino-acid chain: Methionine--tRNA ligase (681 aa).

A 'HIGH' region motif is present at residues 14–24; that stretch reads PYANGSIHLGH. Positions 145, 148, 158, and 161 each coordinate Zn(2+). The 'KMSKS' region signature appears at 331 to 335; the sequence is KMSKS. K334 is a binding site for ATP. The region spanning 579–681 is the tRNA-binding domain; the sequence is AFAAIDLRVA…SGAKPGQRIK (103 aa).

It belongs to the class-I aminoacyl-tRNA synthetase family. MetG type 1 subfamily. In terms of assembly, homodimer. The cofactor is Zn(2+).

It is found in the cytoplasm. It catalyses the reaction tRNA(Met) + L-methionine + ATP = L-methionyl-tRNA(Met) + AMP + diphosphate. Functionally, is required not only for elongation of protein synthesis but also for the initiation of all mRNA translation through initiator tRNA(fMet) aminoacylation. The chain is Methionine--tRNA ligase from Pseudomonas fluorescens (strain ATCC BAA-477 / NRRL B-23932 / Pf-5).